Consider the following 219-residue polypeptide: Counting factor-associated protein C (219 aa).

The first 16 residues, 1 to 16, serve as a signal peptide directing secretion; sequence MKVLILLVSLISVCFS. N-linked (GlcNAc...) asparagine glycans are attached at residues asparagine 74 and asparagine 123.

It localises to the secreted. This is Counting factor-associated protein C (cfaC) from Dictyostelium discoideum (Social amoeba).